The primary structure comprises 85 residues: Double gene block protein 2 (85 aa).

Residues 1 to 2 are Lumenal-facing; the sequence is MK. A helical transmembrane segment spans residues 3 to 23; sequence VLLVTGVLGLLLLIKWKSQST. The Cytoplasmic portion of the chain corresponds to 24-36; the sequence is STSNQTCQCPTSP. A helical transmembrane segment spans residues 37–56; the sequence is WVIYAFYNSLSLVLLLCHLI. The Lumenal portion of the chain corresponds to 57–85; sequence PEIKPIHTSYNTHDSSKQQHISINTGNGK.

It belongs to the carmovirus double gene block protein 2 family.

The protein resides in the host endoplasmic reticulum membrane. In terms of biological role, cell-to-cell movement function. The chain is Double gene block protein 2 from Turnip crinkle virus (TCV).